Here is a 530-residue protein sequence, read N- to C-terminus: Tyrosinase (530 aa).

The signal sequence occupies residues Met1–Gly18. Topologically, residues His19 to Arg473 are lumenal, melanosome. Asn86, Asn111, and Asn161 each carry an N-linked (GlcNAc...) asparagine glycan. Cu cation contacts are provided by His180, His202, and His211. Residues Asn230 and Asn337 are each glycosylated (N-linked (GlcNAc...) asparagine). Cu cation-binding residues include His363 and His367. A glycan (N-linked (GlcNAc...) asparagine) is linked at Asn371. Residue His390 coordinates Cu cation. The chain crosses the membrane as a helical span at residues Ile474 to Gly494. Residues Leu495–Leu530 lie on the Cytoplasmic side of the membrane.

Belongs to the tyrosinase family. In terms of assembly, forms an OPN3-dependent complex with DCT in response to blue light in melanocytes. Cu(2+) serves as cofactor. Post-translationally, glycosylated.

The protein localises to the melanosome membrane. The protein resides in the melanosome. The catalysed reaction is 2 L-dopa + O2 = 2 L-dopaquinone + 2 H2O. The enzyme catalyses L-tyrosine + O2 = L-dopaquinone + H2O. It carries out the reaction 2 5,6-dihydroxyindole-2-carboxylate + O2 = 2 indole-5,6-quinone-2-carboxylate + 2 H2O. Its function is as follows. This is a copper-containing oxidase that functions in the formation of pigments such as melanins and other polyphenolic compounds. Catalyzes the initial and rate limiting step in the cascade of reactions leading to melanin production from tyrosine. In addition to hydroxylating tyrosine to DOPA (3,4-dihydroxyphenylalanine), also catalyzes the oxidation of DOPA to DOPA-quinone, and possibly the oxidation of DHI (5,6-dihydroxyindole) to indole-5,6 quinone. The protein is Tyrosinase (TYR) of Canis lupus familiaris (Dog).